The primary structure comprises 41 residues: Phospholipase A2 homolog nigroviriditoxin acidic subunit A (41 aa).

This sequence belongs to the phospholipase A2 family. Group II subfamily. D49 sub-subfamily. Nigroviriditoxin is a heterodimer of an acidic subunit A and a basic subunit B. As to expression, expressed by the venom gland.

The protein resides in the secreted. Its function is as follows. Heterodimer A-B: Nigroviriditoxin possesses phospholipase A2 (PLA2) activity. It consists of a non-covalent association of a basic PLA2 subunit B with a non-enzymatic subunit A. Subunit A: The acidic subunit of nigroviriditoxin probably is a heterotrimer of three disulfide-linked chains generated by post-translational maturation of a PLA2-like precursor. It appears to have no PLA2 activity of its own, instead inhibiting the catalytic activity of subunit B. It is not toxic to mice by itself but increases toxicity of subunit B. The chain is Phospholipase A2 homolog nigroviriditoxin acidic subunit A from Bothriechis nigroviridis (Black-speckled palm pit viper).